Here is a 398-residue protein sequence, read N- to C-terminus: Phosphoglycerate kinase (398 aa).

Substrate contacts are provided by residues 21–23 (DFN), R36, 59–62 (HLGR), R119, and R157. ATP is bound by residues K208, G296, E327, and 354–357 (GGDS).

This sequence belongs to the phosphoglycerate kinase family. Monomer.

It localises to the cytoplasm. The enzyme catalyses (2R)-3-phosphoglycerate + ATP = (2R)-3-phospho-glyceroyl phosphate + ADP. It functions in the pathway carbohydrate degradation; glycolysis; pyruvate from D-glyceraldehyde 3-phosphate: step 2/5. The polypeptide is Phosphoglycerate kinase (Streptococcus pneumoniae serotype 4 (strain ATCC BAA-334 / TIGR4)).